The chain runs to 201 residues: 3-mercaptopropionate dioxygenase (201 aa).

Fe cation contacts are provided by His-89, His-91, and His-142.

This sequence belongs to the cysteine dioxygenase family. Forms homodimer in the crystal; however, there is no evidence that the dimer exists under physiological conditions or has biological significance. The cofactor is Fe(2+).

The catalysed reaction is 3-sulfanylpropanoate + O2 = 3-sulfinopropanoate + H(+). In terms of biological role, thiol dioxygenase that catalyzes the dioxygenation of 3-mercaptopropionate (3-MPA) to 3-sulfinopropionate (3-SPA). To a lesser extent (40-fold lower efficiency), is also able to oxidize cysteine to cysteine sulfinate (CSA). Cannot use N-acetyl-L-cysteine, homocysteine, and cysteamine as substrates. The physiological role of this enzyme is unclear. The chain is 3-mercaptopropionate dioxygenase from Pseudomonas aeruginosa (strain ATCC 15692 / DSM 22644 / CIP 104116 / JCM 14847 / LMG 12228 / 1C / PRS 101 / PAO1).